A 343-amino-acid chain; its full sequence is Thromboxane A2 receptor (343 aa).

Over 1 to 29 (MWPNASSLGPCFRPMNITLEERRLIASPW) the chain is Extracellular. Asn-4 and Asn-16 each carry an N-linked (GlcNAc...) asparagine glycan. Residues 30 to 52 (FAASFCLVGLASNLLALSVLMGA) form a helical membrane-spanning segment. At 53–66 (RQGSSQSRSSFLTF) the chain is on the cytoplasmic side. The helical transmembrane segment at 67 to 87 (LCGLVLTDFMGLLVTGAIVVT) threads the bilayer. The Extracellular segment spans residues 88–106 (QHFVLFEWQAVDPGCSLCH). Cys-105 and Cys-183 form a disulfide bridge. Residues 107–128 (FMGVIMVFFGLCPLLLGAAMAS) form a helical membrane-spanning segment. Over 129–149 (ERFLGITRPFSRPATASQRRA) the chain is Cytoplasmic. A helical transmembrane segment spans residues 150–172 (WTTVGLVWASALALGLLPLLGVG). The Extracellular segment spans residues 173-193 (HYTVQYPGSWCFLTLGTDPGD). A helical transmembrane segment spans residues 194–219 (VAFGLLFALLGSISVGMSFLLNTISV). The Cytoplasmic segment spans residues 220–246 (ATLCHVYHGQATAQQRPRDCEVEMMVQ). The helical transmembrane segment at 247 to 270 (LMGIMVVASICWMPLLVFIAQTVL) threads the bilayer. Residues 271–289 (QSPPAMSPTGQLSRLTERQ) lie on the Extracellular side of the membrane. A helical membrane pass occupies residues 290-311 (LLIYLRVATWNQILDPWVYILF). Over 312 to 343 (RRAVIQRFYPRLSTRSRSLSLQPQLTRRSTIH) the chain is Cytoplasmic. Residues Ser-329 and Ser-331 each carry the phosphoserine modification.

Belongs to the G-protein coupled receptor 1 family. As to quaternary structure, interacts with RPGRIP1L. Interacts with RACK1; the interaction regulates TBXA2R cell surface expression.

Its subcellular location is the cell membrane. Functionally, receptor for thromboxane A2 (TXA2), a potent stimulator of platelet aggregation. The activity of this receptor is mediated by a G-protein that activates a phosphatidylinositol-calcium second messenger system. In the kidney, the binding of TXA2 to glomerular TP receptors causes intense vasoconstriction. Activates phospholipase C and adenylyl cyclase. The polypeptide is Thromboxane A2 receptor (TBXA2R) (Bos taurus (Bovine)).